The primary structure comprises 106 residues: Replication restart protein PriB (106 aa).

Positions 4–103 (TNRLVLSGTV…LHAEQIEFID (100 aa)) constitute an SSB domain.

The protein belongs to the PriB family. In terms of assembly, homodimer. Interacts with PriA and DnaT. Component of the replication restart primosome. Primosome assembly occurs via a 'hand-off' mechanism. PriA binds to replication forks, subsequently PriB then DnaT bind; DnaT then displaces ssDNA to generate the helicase loading substrate.

Involved in the restart of stalled replication forks, which reloads the replicative helicase on sites other than the origin of replication; the PriA-PriB pathway is the major replication restart pathway. During primosome assembly it facilitates complex formation between PriA and DnaT on DNA; stabilizes PriA on DNA. Stimulates the DNA unwinding activity of PriA helicase. The protein is Replication restart protein PriB of Yersinia pestis.